Here is a 215-residue protein sequence, read N- to C-terminus: Pyrrolidone-carboxylate peptidase (215 aa).

Active-site residues include Glu78, Cys141, and His165.

It belongs to the peptidase C15 family. Homotetramer.

The protein resides in the cytoplasm. It carries out the reaction Release of an N-terminal pyroglutamyl group from a polypeptide, the second amino acid generally not being Pro.. In terms of biological role, removes 5-oxoproline from various penultimate amino acid residues except L-proline. The chain is Pyrrolidone-carboxylate peptidase from Streptococcus pyogenes serotype M18 (strain MGAS8232).